The following is a 438-amino-acid chain: UDP-N-acetylglucosamine 1-carboxyvinyltransferase 1 (438 aa).

22–23 (KN) contacts phosphoenolpyruvate. Arg95 lines the UDP-N-acetyl-alpha-D-glucosamine pocket. Cys119 (proton donor) is an active-site residue. Cys119 carries the post-translational modification 2-(S-cysteinyl)pyruvic acid O-phosphothioketal. UDP-N-acetyl-alpha-D-glucosamine-binding positions include 124–128 (RPIDL), Asp307, and Val329.

Belongs to the EPSP synthase family. MurA subfamily.

Its subcellular location is the cytoplasm. It carries out the reaction phosphoenolpyruvate + UDP-N-acetyl-alpha-D-glucosamine = UDP-N-acetyl-3-O-(1-carboxyvinyl)-alpha-D-glucosamine + phosphate. The protein operates within cell wall biogenesis; peptidoglycan biosynthesis. In terms of biological role, cell wall formation. Adds enolpyruvyl to UDP-N-acetylglucosamine. The protein is UDP-N-acetylglucosamine 1-carboxyvinyltransferase 1 of Lactiplantibacillus plantarum (strain ATCC BAA-793 / NCIMB 8826 / WCFS1) (Lactobacillus plantarum).